The sequence spans 602 residues: CDPK-related protein kinase (602 aa).

The tract at residues 1 to 59 (MGICVSKPSPEPDLHNHHTSIPVNDTSLPPQDNSIPPKDIAIPAQDNNKPPGKKSPFLP) is disordered. Over residues 19–34 (TSIPVNDTSLPPQDNS) the composition is skewed to polar residues. Repeat copies occupy residues 20–26 (SIPVNDT), 27–33 (SLPPQDN), and 34–40 (SIPPKDI). The interval 20–40 (SIPVNDTSLPPQDNSIPPKDI) is 3 X 7 AA tandem repeats of S-[LI]-P-X-X-D-X. A Protein kinase domain is found at 148-410 (FEVGEEVGRG…AAQALCHSWI (263 aa)). Residues 154–162 (VGRGHFGYT) and Lys-180 contribute to the ATP site. Asp-276 serves as the catalytic Proton acceptor. EF-hand domains are found at residues 451–486 (VDELFYLKEQFVLLEPTKNGTISLENIKQALMRNST), 487–527 (DAMK…LEAL), 528–563 (DRWEQHARCAYDLFEKDGNRAIMIEELASELGLGPS), and 564–602 (IPVHAVLHDWIRHTDGKLSFLGYVKLLHGVSTRAIAKAQ).

The protein belongs to the protein kinase superfamily. CAMK Ser/Thr protein kinase family. CaMK subfamily.

It catalyses the reaction L-seryl-[protein] + ATP = O-phospho-L-seryl-[protein] + ADP + H(+). It carries out the reaction L-threonyl-[protein] + ATP = O-phospho-L-threonyl-[protein] + ADP + H(+). The sequence is that of CDPK-related protein kinase (CRK) from Daucus carota (Wild carrot).